Consider the following 560-residue polypeptide: Proline--tRNA ligase (560 aa).

It belongs to the class-II aminoacyl-tRNA synthetase family. ProS type 1 subfamily. In terms of assembly, homodimer.

The protein localises to the cytoplasm. It catalyses the reaction tRNA(Pro) + L-proline + ATP = L-prolyl-tRNA(Pro) + AMP + diphosphate. In terms of biological role, catalyzes the attachment of proline to tRNA(Pro) in a two-step reaction: proline is first activated by ATP to form Pro-AMP and then transferred to the acceptor end of tRNA(Pro). As ProRS can inadvertently accommodate and process non-cognate amino acids such as alanine and cysteine, to avoid such errors it has two additional distinct editing activities against alanine. One activity is designated as 'pretransfer' editing and involves the tRNA(Pro)-independent hydrolysis of activated Ala-AMP. The other activity is designated 'posttransfer' editing and involves deacylation of mischarged Ala-tRNA(Pro). The misacylated Cys-tRNA(Pro) is not edited by ProRS. In Vesicomyosocius okutanii subsp. Calyptogena okutanii (strain HA), this protein is Proline--tRNA ligase.